We begin with the raw amino-acid sequence, 89 residues long: MAVKIRLRRMGAKKNPFYRIVVADSRSPRDGRFIEEIGYYDPIKKPAEVKIDEAKAQDWLKKGAQLSDTAKSLFVKAGIIPGRAKTNEA.

The protein belongs to the bacterial ribosomal protein bS16 family.

This is Small ribosomal subunit protein bS16 from Desulforamulus reducens (strain ATCC BAA-1160 / DSM 100696 / MI-1) (Desulfotomaculum reducens).